Here is a 96-residue protein sequence, read N- to C-terminus: Large ribosomal subunit protein bL27 (96 aa).

A disordered region spans residues 13–33 (KGGGSTANGRNSAGRRLGAKA).

This sequence belongs to the bacterial ribosomal protein bL27 family.

The sequence is that of Large ribosomal subunit protein bL27 from Lactobacillus acidophilus (strain ATCC 700396 / NCK56 / N2 / NCFM).